Here is a 445-residue protein sequence, read N- to C-terminus: Competence protein E (445 aa).

An N-terminal signal peptide occupies residues 1 to 23; sequence MKKYFLKCGYFLVCFCLPLIVFA.

The protein belongs to the bacterial secretin family. PilQ subfamily.

The protein resides in the cell outer membrane. In terms of biological role, involved in transformation (genetic competence for DNA uptake). This is Competence protein E (comE) from Haemophilus influenzae (strain ATCC 51907 / DSM 11121 / KW20 / Rd).